Here is a 209-residue protein sequence, read N- to C-terminus: Peptide methionine sulfoxide reductase MsrA (209 aa).

Cys-51 is a catalytic residue.

It belongs to the MsrA Met sulfoxide reductase family.

It catalyses the reaction L-methionyl-[protein] + [thioredoxin]-disulfide + H2O = L-methionyl-(S)-S-oxide-[protein] + [thioredoxin]-dithiol. The enzyme catalyses [thioredoxin]-disulfide + L-methionine + H2O = L-methionine (S)-S-oxide + [thioredoxin]-dithiol. Its function is as follows. Has an important function as a repair enzyme for proteins that have been inactivated by oxidation. Catalyzes the reversible oxidation-reduction of methionine sulfoxide in proteins to methionine. In Vibrio vulnificus (strain CMCP6), this protein is Peptide methionine sulfoxide reductase MsrA.